Consider the following 59-residue polypeptide: UPF0434 protein Shew_1640 (59 aa).

This sequence belongs to the UPF0434 family.

In Shewanella loihica (strain ATCC BAA-1088 / PV-4), this protein is UPF0434 protein Shew_1640.